The primary structure comprises 397 residues: Dual specificity mitogen-activated protein kinase kinase 4 (397 aa).

The interval Met1–Lys38 is disordered. An N-acetylalanine modification is found at Ala2. Residues Ser7–Gly20 show a composition bias toward gly residues. The interval Met35–Pro50 is d domain. Arg56 is subject to Asymmetric dimethylarginine; alternate. Arg56 is modified (omega-N-methylarginine; alternate). At Ser88 the chain carries Phosphoserine. The Protein kinase domain occupies Leu100–Leu366. ATP-binding positions include Ile106–Val114 and Lys129. The active-site Proton acceptor is Asp227. Ser255 is subject to Phosphoserine. Thr259 carries the post-translational modification Phosphothreonine. Residues His362–Gln385 are DVD domain.

Belongs to the protein kinase superfamily. STE Ser/Thr protein kinase family. MAP kinase kinase subfamily. Interacts with SPAG9. Interacts (via its D domain) with its substrates MAPK8/JNK1, MAPK9/JNK2, MAPK10/JNK3, MAPK11 and MAPK14. Interacts (via its DVD domain) with MAP3Ks activators like MAP3K1/MEKK1 and MAP3K11/MLK3. Interacts with ARRB1, ARRB2 and MAPK8IP3/JIP3. In terms of processing, activated by phosphorylation on Ser-255 and Thr-259 by MAP kinase kinase kinases (MAP3Ks). In terms of tissue distribution, strong expression is detected in most of the central nervous system and in liver and thymus during early stages of development. While expression in nervous system increases over time, expression in fetal liver and thymus gradually decreases as embryogenesis proceeds. High level of expression in the central nervous system persists throughout postnatal development and remained at a stable level in adult brain.

Its subcellular location is the cytoplasm. It localises to the nucleus. It carries out the reaction L-seryl-[protein] + ATP = O-phospho-L-seryl-[protein] + ADP + H(+). The catalysed reaction is L-threonyl-[protein] + ATP = O-phospho-L-threonyl-[protein] + ADP + H(+). The enzyme catalyses L-tyrosyl-[protein] + ATP = O-phospho-L-tyrosyl-[protein] + ADP + H(+). Activated in response to a variety of cellular stresses, including UV and gamma-irradiation, heat shock, hyperosmolarity, T-cell receptor stimulation, peroxide and inflammatory cytokines. Also activated by developmental cues. MAP2K4/MKK4 is activated by the majority of MKKKs, such as MAP3K5/ASK1, MAP3K1/MEKK1, MAP3K7/TAK1, MAP3K10/MLK2, MAP3K11/MLK3, MAP3K12/DLK and MAP3K13/LZK. Functionally, dual specificity protein kinase which acts as an essential component of the MAP kinase signal transduction pathway. Essential component of the stress-activated protein kinase/c-Jun N-terminal kinase (SAP/JNK) signaling pathway. With MAP2K7/MKK7, is the one of the only known kinase to directly activate the stress-activated protein kinase/c-Jun N-terminal kinases MAPK8/JNK1, MAPK9/JNK2 and MAPK10/JNK3. MAP2K4/MKK4 and MAP2K7/MKK7 both activate the JNKs by phosphorylation, but they differ in their preference for the phosphorylation site in the Thr-Pro-Tyr motif. MAP2K4 shows preference for phosphorylation of the Tyr residue and MAP2K7/MKK7 for the Thr residue. The phosphorylation of the Thr residue by MAP2K7/MKK7 seems to be the prerequisite for JNK activation at least in response to pro-inflammatory cytokines, while other stimuli activate both MAP2K4/MKK4 and MAP2K7/MKK7 which synergistically phosphorylate JNKs. MAP2K4 is required for maintaining peripheral lymphoid homeostasis. The MKK/JNK signaling pathway is also involved in mitochondrial death signaling pathway, including the release cytochrome c, leading to apoptosis. Whereas MAP2K7/MKK7 exclusively activates JNKs, MAP2K4/MKK4 additionally activates the p38 MAPKs MAPK11, MAPK12, MAPK13 and MAPK14. The polypeptide is Dual specificity mitogen-activated protein kinase kinase 4 (Map2k4) (Mus musculus (Mouse)).